A 482-amino-acid polypeptide reads, in one-letter code: Alanine aminotransferase 2 (482 aa).

At K299 the chain carries N6-(pyridoxal phosphate)lysine.

This sequence belongs to the class-I pyridoxal-phosphate-dependent aminotransferase family. Alanine aminotransferase subfamily. Homodimer. Pyridoxal 5'-phosphate is required as a cofactor. The N-terminus is blocked. In terms of tissue distribution, mesophyll and bundle sheath cells.

The catalysed reaction is L-alanine + 2-oxoglutarate = pyruvate + L-glutamate. Its pathway is photosynthesis; C4 acid pathway. It participates in amino-acid degradation; L-alanine degradation via transaminase pathway; pyruvate from L-alanine: step 1/1. In terms of biological role, transfer of C3 units between the cytosol of mesophyll and bundle sheath cells to maintain a nitrogen-carbon balance in the C4-dicarboxylic pathway. The protein is Alanine aminotransferase 2 of Panicum miliaceum (Proso millet).